The primary structure comprises 202 residues: HTH-type transcriptional regulator BetI 1 (202 aa).

Positions 8–68 constitute an HTH tetR-type domain; it reads PIRRRQLIQA…SAMRQILWDL (61 aa). The segment at residues 31–50 is a DNA-binding region (H-T-H motif); the sequence is TIARIAKRAGVSAGIISHYF.

The protein operates within amine and polyamine biosynthesis; betaine biosynthesis via choline pathway [regulation]. Functionally, repressor involved in the biosynthesis of the osmoprotectant glycine betaine. It represses transcription of the choline transporter BetT and the genes of BetAB involved in the synthesis of glycine betaine. This Chromohalobacter salexigens (strain ATCC BAA-138 / DSM 3043 / CIP 106854 / NCIMB 13768 / 1H11) protein is HTH-type transcriptional regulator BetI 1.